Reading from the N-terminus, the 89-residue chain is Small ribosomal subunit protein uS15 (89 aa).

It belongs to the universal ribosomal protein uS15 family. Part of the 30S ribosomal subunit. Forms a bridge to the 50S subunit in the 70S ribosome, contacting the 23S rRNA.

One of the primary rRNA binding proteins, it binds directly to 16S rRNA where it helps nucleate assembly of the platform of the 30S subunit by binding and bridging several RNA helices of the 16S rRNA. Its function is as follows. Forms an intersubunit bridge (bridge B4) with the 23S rRNA of the 50S subunit in the ribosome. The chain is Small ribosomal subunit protein uS15 from Ralstonia nicotianae (strain ATCC BAA-1114 / GMI1000) (Ralstonia solanacearum).